The following is a 397-amino-acid chain: L-asparaginase-like protein GM15681 (397 aa).

The N-terminal stretch at 1-22 (MLAQSCCLRLLILLLLFTSICS) is a signal peptide. Cystine bridges form between Cys90/Cys95, Cys189/Cys205, and Cys344/Cys371.

Belongs to the Ntn-hydrolase family.

The sequence is that of L-asparaginase-like protein GM15681 from Drosophila sechellia (Fruit fly).